The following is a 598-amino-acid chain: Elongation factor 4 (598 aa).

The 183-residue stretch at 2 to 184 (NNIRNFAIIA…AIVTKLPAPQ (183 aa)) folds into the tr-type G domain. Residues 14 to 19 (DHGKST) and 131 to 134 (NKVD) each bind GTP.

This sequence belongs to the TRAFAC class translation factor GTPase superfamily. Classic translation factor GTPase family. LepA subfamily.

The protein localises to the cell membrane. It carries out the reaction GTP + H2O = GDP + phosphate + H(+). Required for accurate and efficient protein synthesis under certain stress conditions. May act as a fidelity factor of the translation reaction, by catalyzing a one-codon backward translocation of tRNAs on improperly translocated ribosomes. Back-translocation proceeds from a post-translocation (POST) complex to a pre-translocation (PRE) complex, thus giving elongation factor G a second chance to translocate the tRNAs correctly. Binds to ribosomes in a GTP-dependent manner. The chain is Elongation factor 4 from Wolbachia pipientis subsp. Culex pipiens (strain wPip).